The chain runs to 332 residues: Nucleoid-associated protein VIBHAR_03026 (332 aa).

It belongs to the YejK family.

The protein resides in the cytoplasm. Its subcellular location is the nucleoid. The protein is Nucleoid-associated protein VIBHAR_03026 of Vibrio campbellii (strain ATCC BAA-1116).